The following is a 279-amino-acid chain: Cell death abnormality protein 2 (279 aa).

The 102-residue stretch at 14–115 (FYFPGMSREE…EASLLAAYKK (102 aa)) folds into the SH2 domain. Positions 116–176 (PIIEVVVGTF…PANYVQIQME (61 aa)) constitute an SH3 1 domain. The interval 181–213 (RTSKGASQSSIGSSGGGAERFSSASTSSDNIEL) is disordered. The segment covering 202–211 (SSASTSSDNI) has biased composition (polar residues). The region spanning 214–277 (QPRLPAKAKV…PHTYLRFTAV (64 aa)) is the SH3 2 domain.

The protein belongs to the CRK family. Interacts with ced-5 (via C-terminus which contains a candidate SH3-binding, proline-rich region). Forms a ternary complex with ced-5 and ced-12. Interacts (via SH2 domain) with src-1 (when activated and phosphorylated at 'Tyr-416').

Functionally, required for cell migration and engulfment of cell corpses but not for programmed cell death/apoptosis. Has a role in the migration of the 2 gonadal distal tip cells (DTCs). Plays a role in protecting dopaminergic neurons from oxidative stress-induced degeneration. The polypeptide is Cell death abnormality protein 2 (Caenorhabditis elegans).